The primary structure comprises 157 residues: Peptide methionine sulfoxide reductase MsrA (157 aa).

Residue Cys-10 is part of the active site.

It belongs to the MsrA Met sulfoxide reductase family.

The enzyme catalyses L-methionyl-[protein] + [thioredoxin]-disulfide + H2O = L-methionyl-(S)-S-oxide-[protein] + [thioredoxin]-dithiol. The catalysed reaction is [thioredoxin]-disulfide + L-methionine + H2O = L-methionine (S)-S-oxide + [thioredoxin]-dithiol. In terms of biological role, has an important function as a repair enzyme for proteins that have been inactivated by oxidation. Catalyzes the reversible oxidation-reduction of methionine sulfoxide in proteins to methionine. The polypeptide is Peptide methionine sulfoxide reductase MsrA (Clostridium botulinum (strain Loch Maree / Type A3)).